The chain runs to 1953 residues: Putative surface-exposed virulence protein BigA (1953 aa).

The N-terminal stretch at 1 to 27 (MNPMQKKKLISIAIALTLQSYYIPAIA) is a signal peptide. 3 disordered regions span residues 31-50 (NDDE…EKRA), 88-258 (GGGD…TFSN), and 1496-1517 (TTAP…PQQL). One copy of the 1; truncated repeat lies at 101 to 103 (PDN). Residues 101 to 252 (PDNGGDVTPP…DDDDTPPDDS (152 aa)) form a 15 X 11 AA tandem repeats region. One copy of the 2; truncated repeat lies at 104–113 (GGDVTPPDDG). Residues 114–122 (GNVTPPDDG) form a 3; truncated repeat. Repeat copies occupy residues 123–133 (GNVTPPDDGGD), 134–144 (DNVTPPDDSGD), 145–155 (DDVAPPDDSGD), 156–166 (DDVTPPDDSGD), 167–177 (DDVTPPDDSGD), 178–188 (GDVTPPDDSGD), 189–199 (DDVTPPDDSGD), 200–210 (DDVTPPDDSGD), 211–221 (DDVTPPDDSGD), 222–232 (DDVTPPDDSGD), and 233–243 (DDVTPPDDSGD). 2 stretches are compositionally biased toward acidic residues: residues 141 to 177 (DSGD…DSGD) and 185 to 249 (DSGD…DTPP). Residues 244–252 (DDDTPPDDS) form a 15; truncated repeat. The Autotransporter domain maps to 1649–1952 (SGAQATTVFR…GFMLNVKKTF (304 aa)).

This Salmonella typhimurium (strain LT2 / SGSC1412 / ATCC 700720) protein is Putative surface-exposed virulence protein BigA (bigA).